The primary structure comprises 186 residues: MSVADIRKSAETRMAKSLETLKASLAKIRTGRAHTGILDHVQVEYYGSPVPISQVANVNLVDARTISVQPYEKSMAGPIEKAIRESDLGLNPVSMGETIRVPMPALTEERRRDLTKVVKSEGEDAKVAVRNLRREANEALKKLVKDKEISEDDERRAQDDVQKLTDRAVGDIDKMIVQKEAEIMTV.

It belongs to the RRF family.

The protein resides in the cytoplasm. In terms of biological role, responsible for the release of ribosomes from messenger RNA at the termination of protein biosynthesis. May increase the efficiency of translation by recycling ribosomes from one round of translation to another. In Bordetella parapertussis (strain 12822 / ATCC BAA-587 / NCTC 13253), this protein is Ribosome-recycling factor.